Consider the following 185-residue polypeptide: MAKEEFPGWHGTTIIGVRKGGKVVVAGDGQVSLGPTVIKGSARKVRRLSPGGYDVVCGFAGSTADAFTLLERLEAKLEATPGQLQRASVELAKDWRTDKYLQKLEAMLIVTDGSELYIITGAGDVLEPEHDIAAIGSGGNFALAAARGMMDSDKDAEAVARDAMAIASDICVYTNGNLTVETISA.

T12 is an active-site residue. Residues S168, C171, and T174 each contribute to the Na(+) site.

The protein belongs to the peptidase T1B family. HslV subfamily. As to quaternary structure, a double ring-shaped homohexamer of HslV is capped on each side by a ring-shaped HslU homohexamer. The assembly of the HslU/HslV complex is dependent on binding of ATP.

It is found in the cytoplasm. The enzyme catalyses ATP-dependent cleavage of peptide bonds with broad specificity.. With respect to regulation, allosterically activated by HslU binding. In terms of biological role, protease subunit of a proteasome-like degradation complex believed to be a general protein degrading machinery. This chain is ATP-dependent protease subunit HslV, found in Jannaschia sp. (strain CCS1).